A 295-amino-acid polypeptide reads, in one-letter code: MDQKQIEEIVRSVMASMGQTAPAPSEAKCTTTNCAAPVTSESCALDLGSAEAKAWIGVENPHRADVLTELRRSTVARVCTGRAGPRPRTQALLRFLADHSRSKDTVLKEVPEEWVKAQGLLEVRSEISDKNLYLTRPDMGRRLCAEAVEALKAQCVANPDVQVVISDGLSTDAITVNYEEILPPLMAGLKQAGLKVGTPFFVRYGRVKIEDQIGEILGAKVVILLVGERPGLGQSESLSCYAVYSPRMATTVEADRTCISNIHQGGTPPVEAAAVIVDLAKRMLEQKASGINMTR.

Residues Val207, Glu228, and Cys258 each contribute to the adenosylcob(III)alamin site.

This sequence belongs to the EutC family. As to quaternary structure, the basic unit is a heterodimer which dimerizes to form tetramers. The heterotetramers trimerize; 6 large subunits form a core ring with 6 small subunits projecting outwards. The cofactor is adenosylcob(III)alamin.

The protein resides in the bacterial microcompartment. The catalysed reaction is ethanolamine = acetaldehyde + NH4(+). It functions in the pathway amine and polyamine degradation; ethanolamine degradation. Functionally, catalyzes the deamination of various vicinal amino-alcohols to oxo compounds. Allows this organism to utilize ethanolamine as the sole source of nitrogen and carbon in the presence of external vitamin B12. The protein is Ethanolamine ammonia-lyase small subunit of Escherichia coli O81 (strain ED1a).